Reading from the N-terminus, the 232-residue chain is 7-cyano-7-deazaguanine synthase (232 aa).

Position 8-18 (8-18) interacts with ATP; it reads FSGGQDSTTCL. Residues Cys-187, Cys-196, Cys-199, and Cys-202 each contribute to the Zn(2+) site.

This sequence belongs to the QueC family. It depends on Zn(2+) as a cofactor.

It catalyses the reaction 7-carboxy-7-deazaguanine + NH4(+) + ATP = 7-cyano-7-deazaguanine + ADP + phosphate + H2O + H(+). It participates in purine metabolism; 7-cyano-7-deazaguanine biosynthesis. Functionally, catalyzes the ATP-dependent conversion of 7-carboxy-7-deazaguanine (CDG) to 7-cyano-7-deazaguanine (preQ(0)). This chain is 7-cyano-7-deazaguanine synthase, found in Vibrio parahaemolyticus serotype O3:K6 (strain RIMD 2210633).